The primary structure comprises 221 residues: Toxin coregulated pilus biosynthesis protein P (221 aa).

A DNA-binding region (ompR/PhoB-type) is located at residues 5–109; it reads RVIYQFPDNL…VKLQGYRINI (105 aa). The chain crosses the membrane as a helical span at residues 143 to 163; the sequence is VVPYLVFSALYVALLPVIWWS.

It is found in the cell membrane. Its function is as follows. Involved in TCP pilus biogenesis. The chain is Toxin coregulated pilus biosynthesis protein P (tcpP) from Vibrio cholerae serotype O1 (strain ATCC 39315 / El Tor Inaba N16961).